A 95-amino-acid chain; its full sequence is Co-chaperonin GroES (95 aa).

It belongs to the GroES chaperonin family. As to quaternary structure, heptamer of 7 subunits arranged in a ring. Interacts with the chaperonin GroEL.

It localises to the cytoplasm. In terms of biological role, together with the chaperonin GroEL, plays an essential role in assisting protein folding. The GroEL-GroES system forms a nano-cage that allows encapsulation of the non-native substrate proteins and provides a physical environment optimized to promote and accelerate protein folding. GroES binds to the apical surface of the GroEL ring, thereby capping the opening of the GroEL channel. This Deinococcus radiodurans (strain ATCC 13939 / DSM 20539 / JCM 16871 / CCUG 27074 / LMG 4051 / NBRC 15346 / NCIMB 9279 / VKM B-1422 / R1) protein is Co-chaperonin GroES.